Here is a 68-residue protein sequence, read N- to C-terminus: Large ribosomal subunit protein bL31 (68 aa).

Zn(2+) contacts are provided by Cys16, Cys18, Cys36, and Cys39.

Belongs to the bacterial ribosomal protein bL31 family. Type A subfamily. In terms of assembly, part of the 50S ribosomal subunit. Zn(2+) is required as a cofactor.

Binds the 23S rRNA. This chain is Large ribosomal subunit protein bL31, found in Dictyoglomus turgidum (strain DSM 6724 / Z-1310).